Reading from the N-terminus, the 94-residue chain is Aspartyl/glutamyl-tRNA(Asn/Gln) amidotransferase subunit C (94 aa).

Belongs to the GatC family. In terms of assembly, heterotrimer of A, B and C subunits.

The enzyme catalyses L-glutamyl-tRNA(Gln) + L-glutamine + ATP + H2O = L-glutaminyl-tRNA(Gln) + L-glutamate + ADP + phosphate + H(+). The catalysed reaction is L-aspartyl-tRNA(Asn) + L-glutamine + ATP + H2O = L-asparaginyl-tRNA(Asn) + L-glutamate + ADP + phosphate + 2 H(+). Allows the formation of correctly charged Asn-tRNA(Asn) or Gln-tRNA(Gln) through the transamidation of misacylated Asp-tRNA(Asn) or Glu-tRNA(Gln) in organisms which lack either or both of asparaginyl-tRNA or glutaminyl-tRNA synthetases. The reaction takes place in the presence of glutamine and ATP through an activated phospho-Asp-tRNA(Asn) or phospho-Glu-tRNA(Gln). This Carboxydothermus hydrogenoformans (strain ATCC BAA-161 / DSM 6008 / Z-2901) protein is Aspartyl/glutamyl-tRNA(Asn/Gln) amidotransferase subunit C.